Reading from the N-terminus, the 232-residue chain is LexA repressor (232 aa).

A DNA-binding region (H-T-H motif) is located at residues 26-46 (FDEMKDALDLRSKSGIHRLIT). Active-site for autocatalytic cleavage activity residues include Ser-153 and Lys-191.

This sequence belongs to the peptidase S24 family. Homodimer.

It catalyses the reaction Hydrolysis of Ala-|-Gly bond in repressor LexA.. Represses a number of genes involved in the response to DNA damage (SOS response), including recA and lexA. In the presence of single-stranded DNA, RecA interacts with LexA causing an autocatalytic cleavage which disrupts the DNA-binding part of LexA, leading to derepression of the SOS regulon and eventually DNA repair. This Afipia carboxidovorans (strain ATCC 49405 / DSM 1227 / KCTC 32145 / OM5) (Oligotropha carboxidovorans) protein is LexA repressor.